The chain runs to 384 residues: Putative F-box/kelch-repeat protein At3g27910 (384 aa).

The F-box domain maps to 27 to 79 (SPTSLPLPDEIIVNCFAYIPRCDYPSLSLVSKTFNRLITSIELNIVRSLFQRT). Kelch repeat units follow at residues 138 to 184 (KIYV…IVDG), 185 to 235 (KIYV…VMNK), 237 to 274 (IYIM…VIDN), and 275 to 323 (MLYT…MANH).

This chain is Putative F-box/kelch-repeat protein At3g27910, found in Arabidopsis thaliana (Mouse-ear cress).